The primary structure comprises 921 residues: Retinoblastoma-associated protein (921 aa).

Residues 1-36 form a disordered region; that stretch reads MPPKAPRRAAAAEPPPPPPPPPREDDPAQDSGPEEL. Pro-2 is modified (n,N-dimethylproline; by NTM1). Residues Ser-31 and Ser-243 each carry the phosphoserine modification. 4 positions are modified to phosphothreonine: Thr-246, Thr-350, Thr-364, and Thr-367. Residues 341–360 form a disordered region; it reads PIDSFETERTPRKNNPDEEA. Residues 346–356 are compositionally biased toward basic and acidic residues; that stretch reads ETERTPRKNNP. The interval 367-573 is domain A; the sequence is TPVRTVMNTI…FDLIKQSKDG (207 aa). Residues 367 to 764 form a pocket; binds T and E1A region; that stretch reads TPVRTVMNTI…QRLKTNILQY (398 aa). Ser-561 is subject to Phosphoserine; by CDK2. The spacer stretch occupies residues 574-632; sequence EGPDNLEPACPLSLPLQGNHTAADMYLSPLRSPKKRTSTTRVNSAANTETQAASAFHTQ. Phosphoserine is present on residues Ser-601, Ser-605, and Ser-617. Positions 633–764 are domain B; that stretch reads KPLKSTSLAL…QRLKTNILQY (132 aa). Positions 756–921 are interaction with LIMD1; the sequence is RLKTNILQYA…SKDVSNKEEK (166 aa). The interval 764-921 is domain; mediates interaction with E4F1; sequence YASTRPPTLS…SKDVSNKEEK (158 aa). Phosphoserine is present on residues Ser-773, Ser-781, Ser-788, and Ser-800. Lys-803 carries the post-translational modification N6-methyllysine; by SMYD2. Phosphoserine is present on Ser-804. Phosphothreonine is present on residues Thr-814, Thr-816, Thr-819, and Thr-834. Ser-848 carries the post-translational modification Phosphoserine. Lys-853 carries the N6-methyllysine; by SMYD2 modification. The short motif at 853–869 is the Bipartite nuclear localization signal element; the sequence is KRSAEGGNPPKPLKKLR. 2 positions are modified to N6-acetyllysine; by PCAF: Lys-866 and Lys-867. The tract at residues 872–921 is disordered; that stretch reads IEGADEADGSKHLPAESKFQQKLAEMTSTRTRMQKQRMNESKDVSNKEEK. Residues 908-921 show a composition bias toward basic and acidic residues; sequence RMNESKDVSNKEEK.

This sequence belongs to the retinoblastoma protein (RB) family. As to quaternary structure, the hypophosphorylated form interacts with and sequesters the E2F1 transcription factor, thereby inhibiting E2F1 transcription. Interacts with heterodimeric E2F/DP transcription factor complexes containing TFDP1 and either E2F1/E2F, E2F3, E2F4 or E2F5, or TFDP2 and E2F4. Interacts (when hyperphosphorylated and hypophosphorylated) with PKP3; the interaction inhibits RB1 interaction with and repression of the transcription factor E2F1, potentially via sequestering RB1 to the cytoplasm. The unphosphorylated form interacts with EID1, ARID3B, KDM5A, SUV39H1, MJD2A/JHDM3A and THOC1. Interacts with the N-terminal domain of TAF1. Interacts with SNW1, ATAD5, AATF, DNMT1, LIN9, LMNA, KMT5B, KMT5C, PELP1, UHRF2, TMPO-alpha and USP4. Interacts with GRIP1 and UBR4. Interacts with ARID4A and KDM5B. Interacts with E4F1 and LIMD1. Interacts with SMARCA4/BRG1 and HDAC1. Interacts with USP4. Interacts (when methylated at Lys-853) with L3MBTL1. Binds to CDK1 and CDK2. Interacts with CHEK2; phosphorylates RB1. Interacts with PRMT2. Interacts with CEBPA. P-TEFB complex interacts with RB1; promotes phosphorylation of RB1. Interacts with RBBP9; the interaction disrupts RB1 binding to E2F1. Interacts with KAT2B/PCAF and EP300/P300. Interacts with PAX5. Interacts (phosphorylated and unphosphorylated) with BLCAP. May interact with NDC80. In terms of assembly, (Microbial infection) Interacts with adenovirus E1a protein. (Microbial infection) Interacts with SV40 large T antigen. In terms of processing, phosphorylated. Phosphorylated by CDK6 and CDK4, and subsequently by CDK2 at Ser-561 in G1, thereby releasing E2F1 which is then able to activate cell growth. Dephosphorylated at the late M phase. Phosphorylation of threonine residues in domain C promotes interaction between the C-terminal domain C and the Pocket domain, and thereby inhibits interactions with heterodimeric E2F/DP transcription factor complexes. Dephosphorylated at Ser-788 by calcineruin upon calcium stimulation. CDK3/cyclin-C-mediated phosphorylation at Ser-800 and Ser-804 is required for G0-G1 transition. Phosphorylated by CDK1 and CDK2 upon TGFB1-mediated apoptosis. Post-translationally, monomethylation at Lys-803 by SMYD2 enhances phosphorylation at Ser-800 and Ser-804, and promotes cell cycle progression. Monomethylation at Lys-853 by SMYD2 promotes interaction with L3MBTL1. N-terminus is methylated by METTL11A/NTM1. Acetylated in the skin. Acetylation at Lys-866 and Lys-867 regulates subcellular localization during keratinocytes differentiation. Expressed in the cell nuclei of renal tubules, hepatocytes and skeletal muscles. Expressed in skin (at protein level).

It localises to the nucleus. It is found in the cytoplasm. Its function is as follows. Tumor suppressor that is a key regulator of the G1/S transition of the cell cycle. The hypophosphorylated form binds transcription regulators of the E2F family, preventing transcription of E2F-responsive genes. Both physically blocks E2Fs transactivating domain and recruits chromatin-modifying enzymes that actively repress transcription. Cyclin and CDK-dependent phosphorylation of RB1 induces its dissociation from E2Fs, thereby activating transcription of E2F responsive genes and triggering entry into S phase. RB1 also promotes the G0-G1 transition upon phosphorylation and activation by CDK3/cyclin-C. Directly involved in heterochromatin formation by maintaining overall chromatin structure and, in particular, that of constitutive heterochromatin by stabilizing histone methylation. Recruits and targets histone methyltransferases SUV39H1, KMT5B and KMT5C, leading to epigenetic transcriptional repression. Controls histone H4 'Lys-20' trimethylation. Inhibits the intrinsic kinase activity of TAF1. Mediates transcriptional repression by SMARCA4/BRG1 by recruiting a histone deacetylase (HDAC) complex to the c-FOS promoter. In resting neurons, transcription of the c-FOS promoter is inhibited by BRG1-dependent recruitment of a phospho-RB1-HDAC1 repressor complex. Upon calcium influx, RB1 is dephosphorylated by calcineurin, which leads to release of the repressor complex. This chain is Retinoblastoma-associated protein (Rb1), found in Mus musculus (Mouse).